The primary structure comprises 95 residues: Small ribosomal subunit protein uS17 (95 aa).

The protein belongs to the universal ribosomal protein uS17 family. In terms of assembly, part of the 30S ribosomal subunit.

Its function is as follows. One of the primary rRNA binding proteins, it binds specifically to the 5'-end of 16S ribosomal RNA. This is Small ribosomal subunit protein uS17 from Mycoplasmopsis synoviae (strain 53) (Mycoplasma synoviae).